The sequence spans 466 residues: Replicative helicase loading/DNA remodeling protein DnaB (466 aa).

The interval 3–113 (RQAFEFGLRP…ETQFVYQLIQ (111 aa)) is DDBH1. Residues 200–292 (EMLRQMLGKH…TSSSAGKSSE (93 aa)) form a DDBH2-1 region. Residues 293-401 (VNPKPQSDEW…QPKNEGSSGN (109 aa)) form a DDBH2-2 region.

This sequence belongs to the DnaB/DnaD family. In terms of assembly, homotetramer, higher-order oligomers are induced by ssDNA. The DNA replisome assembles sequentially on oriC in this order; DnaA, DnaD, DnaB, DnaI-DnaC helicase. Part of the replication restart primosome, PriA binds first, then DnaD and subsequently DnaB bind.

In terms of biological role, helps DnaI load the DnaC replicative helicase onto single-stranded (ss)DNA. During DNA replication from the origin of replication (oriC) in the DNA replisome, DnaB and DnaD are required after DnaA and before subsequent helicase DnaC loading. Component of the replication restart primosome, which reloads the replicative helicase on sites other than oriC. Essential for replication initiation of the chromosome and plasmids. Remodels DNA, laterally compacts supercoiled plasmid and linear DNA. Binds supercoiled, nicked and linear double-stranded (ds)DNA and phage phiX174 single-stranded (ss)DNA; phiX174 ssDNA is a better substrate than for B.subtilis. No binding to phage M13 ssDNA although it induces oligomers. The sequence is that of Replicative helicase loading/DNA remodeling protein DnaB from Staphylococcus aureus (strain NCTC 8325 / PS 47).